We begin with the raw amino-acid sequence, 659 residues long: DNA mismatch repair protein MutL (659 aa).

The tract at residues 338 to 459 (GAPRGASKPG…DTTSERDSLP (122 aa)) is disordered. Basic and acidic residues predominate over residues 352 to 362 (SPEHSPTDRDA). Polar residues predominate over residues 374–391 (SDGNGQRTAASGATSESP).

Belongs to the DNA mismatch repair MutL/HexB family.

Its function is as follows. This protein is involved in the repair of mismatches in DNA. It is required for dam-dependent methyl-directed DNA mismatch repair. May act as a 'molecular matchmaker', a protein that promotes the formation of a stable complex between two or more DNA-binding proteins in an ATP-dependent manner without itself being part of a final effector complex. The chain is DNA mismatch repair protein MutL from Halobacterium salinarum (strain ATCC 29341 / DSM 671 / R1).